The chain runs to 566 residues: Protein downstream neighbor of Son (566 aa).

The segment at 1 to 110 (MALSVPGYSP…QPEAPVPFLD (110 aa)) is disordered. Phosphoserine occurs at positions 28 and 34. Over residues 62–72 (GGRGGGSGGGP) the composition is skewed to gly residues. Low complexity predominate over residues 73–82 (AAARRNPFAR).

Belongs to the DONSON family. Component of the replisome complex composed of at least DONSON, MCM2, MCM7, PCNA and TICRR; interaction at least with PCNA occurs during DNA replication. In terms of tissue distribution, expressed in the brain, with higher levels in prenatal compared to adult brain.

It localises to the nucleus. In terms of biological role, replisome component that maintains genome stability by protecting stalled or damaged replication forks. After the induction of replication stress, required for the stabilization of stalled replication forks, the efficient activation of the intra-S-phase and G/2M cell-cycle checkpoints and the maintenance of genome stability. This is Protein downstream neighbor of Son (DONSON) from Homo sapiens (Human).